Here is a 302-residue protein sequence, read N- to C-terminus: ATP synthase gamma chain, sodium ion specific (302 aa).

It belongs to the ATPase gamma chain family. F-type ATPases have 2 components, CF(1) - the catalytic core - and CF(0) - the membrane proton channel. CF(1) has five subunits: alpha(3), beta(3), gamma(1), delta(1), epsilon(1). CF(0) has three main subunits: a, b and c.

The protein resides in the cell membrane. With respect to regulation, inhibited by nitrate. Its function is as follows. Produces ATP from ADP in the presence of a proton gradient across the membrane. The gamma chain is believed to be important in regulating ATPase activity and the flow of protons through the CF(0) complex. This is ATP synthase gamma chain, sodium ion specific (atpG) from Acetobacterium woodii (strain ATCC 29683 / DSM 1030 / JCM 2381 / KCTC 1655 / WB1).